The chain runs to 575 residues: Jasmonoyl--L-amino acid synthetase JAR1 (575 aa).

Positions 10 to 30 (MNRVIDEFDEMTRNAHQVQKQ) form a coiled coil. S98 contacts ATP. A jasmonate-binding site is contributed by S101. ATP-binding positions include M118, T121, G163, N168, and 331–336 (GSSEGW). 166–170 (TTNVY) contacts an L-alpha-amino acid. 328–331 (HDYG) is a binding site for jasmonate. 530-534 (KIQEH) contributes to the an L-alpha-amino acid binding site. K557 is a binding site for ATP.

The protein belongs to the IAA-amido conjugating enzyme family. Interacts with GSTU20/FIP1 under continuous far red (cFR) light; this binding increases its activity and determines the priority of substrate binding.

The protein localises to the cytoplasm. It carries out the reaction a jasmonate + an L-alpha-amino acid + ATP = a jasmonyl-L-amino acid + AMP + diphosphate + H(+). The catalysed reaction is (+)-7-isojasmonate + L-isoleucine + ATP = L-isoleucine-(+)-7-isojasmonate + AMP + diphosphate + H(+). With respect to regulation, activated by GSTU20/FIP1. Its function is as follows. Catalyzes the synthesis of jasmonates-amino acid conjugates by adenylation; can use Ile and, in vitro at least, Val, Leu and Phe as conjugating amino acids on jasmonic acid (JA) and 9,10-dihydro-JA substrates, and to a lower extent, on 3-oxo-2-(2Z-pentenyl)-cyclopentane-1-butyric acid (OPC-4) and 12-hydroxy-JA (12-OH-JA). Can synthesize adenosine 5-tetraphosphate in vitro. Required for the JA-mediated signaling pathway that regulates many developmental and defense mechanisms, including growth root inhibition, vegetative storage proteins (VSPs) accumulation, induced systemic resistance (ISR), response to wounding and herbivores, tolerance to ozone O(3) (probably having a role in lesion containment). Plays an important role in the accumulation of JA-Ile in response to wounding, both locally and systemically; promotes JA responding genes especially in distal part of wounded plants, via the JA-Ile-stimulated degradation of JAZ repressor proteins by the SCF(COI)E3 ubiquitin-protein ligase pathway. Involved in the apoptosis-like programmed cell death (PCD) induced by fungal toxin fumonisin B1-mediated (FB1). Required for volatile compounds (C6-aldehydes and allo-ocimene)-mediated defense activation. Involved in the non-pathogenic rhizobacterium-mediated ISR (defense priming) by P.fluorescens (strains CHAOr and WCS417r) and P.putida LSW17S against infection leaf pathogens such as P.syringae pv. tomato and H.parasitica. Required for the JA-dependent resistance to fungi such as P.irregulare, U.vignae and U.appendiculatus. Necessary to induce systemic resistance against R.solanaceraum and P.syringae pv. tomato with P.oligandrum (a non-pathogenic biocontrol agent) cell wall protein fraction (CWP). Mediates PGIP2 accumulation in response to B.cinerea infection and thus contributes to resistance against this pathogen. Modulates the UV-B alteration of leaves attractiveness to diamondback moths P.xylostella leading to insect oviposition. Involved in the regulation of far-red light influence on development, being an actor of the interplay between light and JA signaling. Seems necessary for the salicylic acid (SA)-mediated, NPR1-independent resistance pathway. May contribute to the chitin-elicited pathway. Contributes to the sensitivity toward F.graminearum. The protein is Jasmonoyl--L-amino acid synthetase JAR1 of Arabidopsis thaliana (Mouse-ear cress).